The chain runs to 300 residues: Phosphatidylserine decarboxylase proenzyme (300 aa).

Residues Asp-113, His-169, and Ser-256 each act as charge relay system; for autoendoproteolytic cleavage activity in the active site. The Schiff-base intermediate with substrate; via pyruvic acid; for decarboxylase activity role is filled by Ser-256. Ser-256 carries the pyruvic acid (Ser); by autocatalysis modification.

This sequence belongs to the phosphatidylserine decarboxylase family. PSD-B subfamily. Prokaryotic type II sub-subfamily. In terms of assembly, heterodimer of a large membrane-associated beta subunit and a small pyruvoyl-containing alpha subunit. The cofactor is pyruvate. Is synthesized initially as an inactive proenzyme. Formation of the active enzyme involves a self-maturation process in which the active site pyruvoyl group is generated from an internal serine residue via an autocatalytic post-translational modification. Two non-identical subunits are generated from the proenzyme in this reaction, and the pyruvate is formed at the N-terminus of the alpha chain, which is derived from the carboxyl end of the proenzyme. The autoendoproteolytic cleavage occurs by a canonical serine protease mechanism, in which the side chain hydroxyl group of the serine supplies its oxygen atom to form the C-terminus of the beta chain, while the remainder of the serine residue undergoes an oxidative deamination to produce ammonia and the pyruvoyl prosthetic group on the alpha chain. During this reaction, the Ser that is part of the protease active site of the proenzyme becomes the pyruvoyl prosthetic group, which constitutes an essential element of the active site of the mature decarboxylase.

It is found in the cell membrane. The enzyme catalyses a 1,2-diacyl-sn-glycero-3-phospho-L-serine + H(+) = a 1,2-diacyl-sn-glycero-3-phosphoethanolamine + CO2. It participates in phospholipid metabolism; phosphatidylethanolamine biosynthesis; phosphatidylethanolamine from CDP-diacylglycerol: step 2/2. In terms of biological role, catalyzes the formation of phosphatidylethanolamine (PtdEtn) from phosphatidylserine (PtdSer). This chain is Phosphatidylserine decarboxylase proenzyme, found in Ruminiclostridium cellulolyticum (strain ATCC 35319 / DSM 5812 / JCM 6584 / H10) (Clostridium cellulolyticum).